The primary structure comprises 601 residues: Alpha-terpineol synthase, chloroplastic (601 aa).

The transit peptide at 1 to 47 (MSTISIHHVGILRNPLHSKSKRASINKPWSLSLPRSSSASRLVEPCR) directs the protein to the chloroplast. Asp-357 and Asp-361 together coordinate Mn(2+). Residues 357–361 (DDVYD) carry the DDXXD motif motif. 2 homodimerization regions span residues 363 to 369 (YGTLDEL) and 435 to 471 (EAEW…ELSL). 2 residues coordinate Mn(2+): Asp-499 and Glu-507.

Belongs to the terpene synthase family. Homodimer. It depends on Mn(2+) as a cofactor. Mg(2+) is required as a cofactor.

Its subcellular location is the plastid. It is found in the chloroplast. The enzyme catalyses (2E)-geranyl diphosphate + H2O = (S)-alpha-terpineol + diphosphate. It catalyses the reaction (2E)-geranyl diphosphate + H2O = (R)-alpha-terpineol + diphosphate. The protein operates within secondary metabolite biosynthesis; terpenoid biosynthesis. In terms of biological role, involved in the biosynthesis of phenolic monoterpenes natural products. Monoterpene synthase which catalyzes the conversion of geranyl diphosphate (GPP) to alpha-terpineol (isomer is not determined). The chain is Alpha-terpineol synthase, chloroplastic from Thymus caespititius (Cretan thyme).